We begin with the raw amino-acid sequence, 257 residues long: HTH-type transcriptional activator mta (257 aa).

The region spanning 2-71 (KYQVKQVAEI…LDEIKEMLDH (70 aa)) is the HTH merR-type domain. Positions 5–24 (VKQVAEISGVSIRTLHHYDN) form a DNA-binding region, H-T-H motif. A hinge region spans residues 71-74 (HPNF). The essential for dimerization stretch occupies residues 76–104 (RKAALQSQKEILMKKKQRMDEMIQTIDRT). Residues 76 to 107 (RKAALQSQKEILMKKKQRMDEMIQTIDRTLLS) adopt a coiled-coil conformation.

In terms of assembly, homodimer.

It localises to the cytoplasm. In terms of biological role, global transcriptional regulator that activates transcription of bmr and blt by binding directly to their promoter. Also stimulates the expression of the mta gene itself, ydfK and ymfE. The sequence is that of HTH-type transcriptional activator mta (mta) from Bacillus subtilis (strain 168).